The primary structure comprises 106 residues: UPF0145 protein Tlet_1264 (106 aa).

It belongs to the UPF0145 family.

This chain is UPF0145 protein Tlet_1264, found in Pseudothermotoga lettingae (strain ATCC BAA-301 / DSM 14385 / NBRC 107922 / TMO) (Thermotoga lettingae).